Here is a 179-residue protein sequence, read N- to C-terminus: Large ribosomal subunit protein uL5 (179 aa).

It belongs to the universal ribosomal protein uL5 family. In terms of assembly, part of the 50S ribosomal subunit; part of the 5S rRNA/L5/L18/L25 subcomplex. Contacts the 5S rRNA and the P site tRNA. Forms a bridge to the 30S subunit in the 70S ribosome.

In terms of biological role, this is one of the proteins that bind and probably mediate the attachment of the 5S RNA into the large ribosomal subunit, where it forms part of the central protuberance. In the 70S ribosome it contacts protein S13 of the 30S subunit (bridge B1b), connecting the 2 subunits; this bridge is implicated in subunit movement. Contacts the P site tRNA; the 5S rRNA and some of its associated proteins might help stabilize positioning of ribosome-bound tRNAs. The chain is Large ribosomal subunit protein uL5 from Shouchella clausii (strain KSM-K16) (Alkalihalobacillus clausii).